Reading from the N-terminus, the 217-residue chain is Deoxyribose-phosphate aldolase 1 (217 aa).

Catalysis depends on Asp89, which acts as the Proton donor/acceptor. The active-site Schiff-base intermediate with acetaldehyde is Lys151. The active-site Proton donor/acceptor is Lys180.

Belongs to the DeoC/FbaB aldolase family. DeoC type 1 subfamily.

Its subcellular location is the cytoplasm. The catalysed reaction is 2-deoxy-D-ribose 5-phosphate = D-glyceraldehyde 3-phosphate + acetaldehyde. It participates in carbohydrate degradation; 2-deoxy-D-ribose 1-phosphate degradation; D-glyceraldehyde 3-phosphate and acetaldehyde from 2-deoxy-alpha-D-ribose 1-phosphate: step 2/2. In terms of biological role, catalyzes a reversible aldol reaction between acetaldehyde and D-glyceraldehyde 3-phosphate to generate 2-deoxy-D-ribose 5-phosphate. The sequence is that of Deoxyribose-phosphate aldolase 1 from Cutibacterium acnes (strain DSM 16379 / KPA171202) (Propionibacterium acnes).